A 722-amino-acid polypeptide reads, in one-letter code: Transmembrane channel-like protein 8 (722 aa).

Residues Met1 to Ala21 form a disordered region. Residues Met1–Arg118 are Cytoplasmic-facing. A phosphoserine mark is found at Ser6 and Ser18. A helical membrane pass occupies residues Phe119–Leu139. The Lumenal segment spans residues Val140–Ser204. Residue Asn184 is glycosylated (N-linked (GlcNAc...) asparagine). Residues Ile205–Leu225 form a helical membrane-spanning segment. The Cytoplasmic segment spans residues Gln226–Asn307. The chain crosses the membrane as a helical span at residues Ile308–Ser328. At Gln329–Asn375 the chain is on the lumenal side. The TMC domain stretch occupies residues Glu366–Ser534. N-linked (GlcNAc...) asparagine glycosylation is present at Asn375. The helical transmembrane segment at Leu376–Leu396 threads the bilayer. Topologically, residues Gly397–Glu430 are cytoplasmic. Residues Leu431–Leu451 form a helical membrane-spanning segment. Residues Pro452–Gly492 lie on the Lumenal side of the membrane. A helical transmembrane segment spans residues Leu493–Ile513. At Lys514–Phe536 the chain is on the cytoplasmic side. A helical membrane pass occupies residues Phe537–Ile557. Over Ser558 to Leu598 the chain is Lumenal. Asn571 carries N-linked (GlcNAc...) asparagine glycosylation. A helical membrane pass occupies residues Ser599 to Ile619. Residues Ser620–Leu722 lie on the Cytoplasmic side of the membrane. Phosphoserine is present on residues Ser658, Ser663, and Ser673. The tract at residues Ser658–Leu722 is disordered. The span at Phe678–Arg687 shows a compositional bias: pro residues. Residues Pro689–Ser712 are compositionally biased toward low complexity. Ser698 is subject to Phosphoserine.

Belongs to the TMC family. As to quaternary structure, interacts with TMC6. Interacts and forms a complex with TMC6 and CIB1; the interaction stabilizes each component of the complex. Interacts and forms a complex with TMC6 and SLC30A1/ZNT1; the interaction regulates zinc transport into the ER. Interacts with TRADD; the interaction competes with TRADD/RIPK1/TRAF2/cIAPs complex I formation and facilites complex II formation. In terms of tissue distribution, expressed in thymus, lung, prostate, placenta, testis and spleen. Expressed in lymphocytes and peripheral lymphocytes.

Its subcellular location is the endoplasmic reticulum membrane. The protein localises to the golgi apparatus membrane. It is found in the nucleus membrane. Acts as a regulatory protein involved in the regulation of numerous cellular processes. Together with its homolog TMC6/EVER1, forms a complex with calcium-binding protein CIB1 in lymphocytes and keratynocytes where TMC6 and TMC8 stabilize CIB1 levels and reciprocally. Together with TMC6, also forms a complex with and activates zinc transporter ZNT1 at the ER membrane of keratynocytes, thereby facilitating zinc uptake into the ER. Also inhibits receptor-mediated calcium release from ER stores and calcium activated and volume regulated chloride channels. Down-regulates the activity of transcription factors induced by zinc and cytokines. Also sequesters TRADD which impairs the recruitment of TRAF2 and RIPK1 in the pro-survival complex I and promotes proapoptotic complex II formation, and may therefore be involved in TNF-induced cell death/survival decisions. The polypeptide is Transmembrane channel-like protein 8 (Mus musculus (Mouse)).